We begin with the raw amino-acid sequence, 144 residues long: Large ribosomal subunit protein uL15 (144 aa).

The interval 1-57 (MLLNTLSPAAGSKHAPKRLGRGVGSGLGKTGGRGHKGQKSRSGGKVRPGFEGGQMPL) is disordered. The span at 21 to 31 (RGVGSGLGKTG) shows a compositional bias: gly residues. The span at 32 to 44 (GRGHKGQKSRSGG) shows a compositional bias: basic residues.

This sequence belongs to the universal ribosomal protein uL15 family. As to quaternary structure, part of the 50S ribosomal subunit.

In terms of biological role, binds to the 23S rRNA. This is Large ribosomal subunit protein uL15 from Vibrio cholerae serotype O1 (strain ATCC 39541 / Classical Ogawa 395 / O395).